The chain runs to 66 residues: KEGYIVNYYDGCKYACVKLGDNDYCLRECRLRYYKSAGGYCYAFACWCTHLYEQAVVWPLPNKTCN.

Positions 1–66 (KEGYIVNYYD…VWPLPNKTCN (66 aa)) constitute an LCN-type CS-alpha/beta domain. 4 disulfides stabilise this stretch: cysteine 12/cysteine 65, cysteine 16/cysteine 41, cysteine 25/cysteine 46, and cysteine 29/cysteine 48.

Expressed by the venom gland.

It is found in the secreted. Beta toxins bind voltage-independently at site-4 of sodium channels (Nav) and reduces peak current and shifts the voltage of activation toward more negative potentials thereby affecting sodium channel activation and promoting spontaneous and repetitive firing. This toxin is strongly toxic to mice. This Centruroides villegasi (Scorpion) protein is Beta-mammal toxin Cv3.